The chain runs to 1149 residues: Potassium channel subfamily U member 1 (1149 aa).

Residues 1–24 (MFQTKLRNESWEDLQKMSCTTEIQ) are Extracellular-facing. Residues 25–45 (VAFILSSFMTFISGLIILLIF) traverse the membrane as a helical segment. The Cytoplasmic portion of the chain corresponds to 46–101 (RLIWRTVKKWQIIKGTGIILELFTSGSIRRNHVRSLHFHGRFRDRIEMLLSAQTFV). The helical transmembrane segment at 102 to 122 (GQVLVILVFVLSIGSLIIYFI) threads the bilayer. Residues 123–138 (NSADPVGSCSSYEDKT) are Extracellular-facing. Residues 139–159 (IPVDLVFNAFFSFYFGLRFMA) traverse the membrane as a helical segment. The Cytoplasmic portion of the chain corresponds to 160 to 163 (ADDK). The chain crosses the membrane as a helical span at residues 164–184 (IKFWLEMNSIVDIFTIPPTFI). The Extracellular segment spans residues 185-188 (SYYL). The chain crosses the membrane as a helical; Voltage-sensor span at residues 189–209 (KSNWLGLRFLRALRLLELPRI). The Cytoplasmic segment spans residues 210–226 (LQILRAIKTSNSVKFSK). Residues 227-247 (LLSIVLSTWFTAAGFIHLVEN) form a helical membrane-spanning segment. Topologically, residues 248 to 259 (SGDPWLKGRNSQ) are extracellular. Residues 260–282 (NISYFDSVYLVMATTSTVGFGDV) constitute an intramembrane region (pore-forming). The short motif at 276–279 (TVGF) is the Selectivity for potassium element. Residues 283 to 291 (VAKTSLGRT) are Extracellular-facing. The helical transmembrane segment at 292–312 (FIIFFTLGSLILFANYIPEMV) threads the bilayer. Residues 313–1149 (ELFANKRKYT…EDPFAYSEPL (837 aa)) are Cytoplasmic-facing. RCK N-terminal domains lie at 331–473 (KKFI…DNII) and 713–884 (RNHI…EGSL). Low complexity predominate over residues 829-845 (IDSSSDSSPSVSEETAS). Disordered stretches follow at residues 829 to 851 (IDSS…NGHN) and 1106 to 1149 (ARNQ…SEPL). Positions 1106 to 1120 (ARNQIRTNSSITSQK) are enriched in polar residues.

The protein belongs to the potassium channel family. Calcium-activated (TC 1.A.1.3) subfamily. KCa5.1/KCNU1 sub-subfamily. As to quaternary structure, homotetramer; which constitutes the calcium-activated potassium channel. Interacts with LRRC52; this interaction changes some channel gating properties, such as shifting gating to more negative potentials at a given pH. In terms of tissue distribution, testis-specific.

The protein localises to the cell membrane. Its subcellular location is the cell projection. The protein resides in the cilium. It localises to the flagellum membrane. The catalysed reaction is K(+)(in) = K(+)(out). With respect to regulation, regulated by changes in cytosolic pH; activated by alkalization. VU0546110 acts as a selective inhibitor. The auxiliary subunit LRRC52 shifts the activation of KCNU1 to more negative potentials at a given pH. Testis-specific potassium channel activated by both intracellular pH and membrane voltage that mediates export of K(+). Represents the primary spermatozoan K(+) current. The channel underlies a pH-triggered membrane hyperpolarization during the process of sperm capacitation, as sperm encounter the alkaline environment near the ovum in the female reproductive tract, thereby playing an essential for male fertility. This chain is Potassium channel subfamily U member 1 (KCNU1), found in Macaca fascicularis (Crab-eating macaque).